Consider the following 172-residue polypeptide: NAD(P)H-quinone oxidoreductase subunit I, chloroplastic (172 aa).

4Fe-4S ferredoxin-type domains lie at Gly55 to Lys84 and Leu95 to Glu124. Positions 64, 67, 70, 74, 104, 107, 110, and 114 each coordinate [4Fe-4S] cluster.

This sequence belongs to the complex I 23 kDa subunit family. In terms of assembly, NDH is composed of at least 16 different subunits, 5 of which are encoded in the nucleus. [4Fe-4S] cluster serves as cofactor.

The protein resides in the plastid. It is found in the chloroplast thylakoid membrane. The catalysed reaction is a plastoquinone + NADH + (n+1) H(+)(in) = a plastoquinol + NAD(+) + n H(+)(out). It catalyses the reaction a plastoquinone + NADPH + (n+1) H(+)(in) = a plastoquinol + NADP(+) + n H(+)(out). Functionally, NDH shuttles electrons from NAD(P)H:plastoquinone, via FMN and iron-sulfur (Fe-S) centers, to quinones in the photosynthetic chain and possibly in a chloroplast respiratory chain. The immediate electron acceptor for the enzyme in this species is believed to be plastoquinone. Couples the redox reaction to proton translocation, and thus conserves the redox energy in a proton gradient. The sequence is that of NAD(P)H-quinone oxidoreductase subunit I, chloroplastic from Capsella bursa-pastoris (Shepherd's purse).